Consider the following 380-residue polypeptide: MSEIALEAWGEHEALLLKPPRSPLSIPPPKPRTAVLFPRREGFYTELGGYLPEVRLRFETYGTLSRRRDNAVLVFHALTGSAHLAGTYDEETFRSLSPLEQAFGREGWWDSLVGPGRILDPALYYVVSANHLGSCYGSTGPLSLDPRTGRPYGRDFPPLTIRDLARAQARLLDHLGVEKAIVIGGSLGGMVALEFALMYPERVKKLVVLAAPARHGPWARAFNHLSRQAILQDPEYQKGNPAPKGMALARGIAMMSYRAPEGFEARWGAEPELGETYLDYQGEKFLRRFHAESYLVLSRAMDTHDVGRGRGGVEEALKRLRAIPSLFVGIDTDLLYPAWEVRQAAKAAGARYREIKSPHGHDAFLIETDQVEEILDAFLP.

One can recognise an AB hydrolase-1 domain in the interval 70 to 366; that stretch reads NAVLVFHALT…SPHGHDAFLI (297 aa). Serine 186 (nucleophile) is an active-site residue. Arginine 250 serves as a coordination point for substrate. Residues aspartate 333 and histidine 361 contribute to the active site. Aspartate 362 is a substrate binding site.

It belongs to the AB hydrolase superfamily. MetX family. As to quaternary structure, homodimer.

It is found in the cytoplasm. The catalysed reaction is L-homoserine + acetyl-CoA = O-acetyl-L-homoserine + CoA. The protein operates within amino-acid biosynthesis; L-methionine biosynthesis via de novo pathway; O-acetyl-L-homoserine from L-homoserine: step 1/1. Its function is as follows. Transfers an acetyl group from acetyl-CoA to L-homoserine, forming acetyl-L-homoserine. This Thermus thermophilus (strain ATCC 27634 / DSM 579 / HB8) protein is Homoserine O-acetyltransferase.